A 760-amino-acid polypeptide reads, in one-letter code: Cellulose synthase-like protein G1 (760 aa).

A run of 2 helical transmembrane segments spans residues 28 to 48 (IYAI…VHSL) and 54 to 74 (TLIT…WATT). Active-site residues include Asp142 and Asp447. The next 5 helical transmembrane spans lie at 530–550 (IPLT…VSVF), 558–578 (FWLY…DFLL), 593–613 (LMIK…LKTL), 656–676 (VAIV…FCGG), and 680–700 (LELM…GAMV).

Belongs to the glycosyltransferase 2 family. Plant cellulose synthase-like G subfamily. In terms of tissue distribution, expressed in young seedlings, primarily in the vascular tissue.

Its subcellular location is the golgi apparatus membrane. Thought to be a Golgi-localized beta-glycan synthase that polymerize the backbones of noncellulosic polysaccharides (hemicelluloses) of plant cell wall. This chain is Cellulose synthase-like protein G1 (CSLG1), found in Arabidopsis thaliana (Mouse-ear cress).